A 225-amino-acid polypeptide reads, in one-letter code: MKLLVVEDEALLRHHLYTRLGEQGHVVDAVPDAEEALYRVSEYHHDLAVIDLGLPGMSGLDLIRELRSQGKSFPILILTARGNWQDKVEGLAAGADDYVVKPFQFEELEARLNALLRRSSGFVQSTIEAGPLVLDLNRKQALVEEQPVALTAYEYRILEYLMRHHQQVVAKERLMEQLYPDDEERDANVIEVLVGRLRRKLEACGGFKPIDTVRGQGYLFTERCR.

One can recognise a Response regulatory domain in the interval 2 to 116; that stretch reads KLLVVEDEAL…ELEARLNALL (115 aa). Position 51 is a 4-aspartylphosphate (aspartate 51). The ompR/PhoB-type DNA-binding region spans 124 to 222; it reads QSTIEAGPLV…VRGQGYLFTE (99 aa).

Member of the two-component regulatory system PhoP/PhoQ that plays a role in the regulation of resistance towards polymyxin B and cationic antimicrobial peptides in response to limiting concentrations of Mg(2+). Functions as a transcriptional activator by direct binding to a cis-acting sequence upstream of the target gene promoters including oprH and pmrH promoters. In Pseudomonas aeruginosa (strain ATCC 15692 / DSM 22644 / CIP 104116 / JCM 14847 / LMG 12228 / 1C / PRS 101 / PAO1), this protein is Two-component response regulator PhoP (phoP).